We begin with the raw amino-acid sequence, 171 residues long: 3-hydroxydecanoyl-[acyl-carrier-protein] dehydratase (171 aa).

Histidine 70 is a catalytic residue.

It belongs to the thioester dehydratase family. FabA subfamily. As to quaternary structure, homodimer.

It localises to the cytoplasm. It catalyses the reaction a (3R)-hydroxyacyl-[ACP] = a (2E)-enoyl-[ACP] + H2O. The catalysed reaction is (3R)-hydroxydecanoyl-[ACP] = (2E)-decenoyl-[ACP] + H2O. It carries out the reaction (2E)-decenoyl-[ACP] = (3Z)-decenoyl-[ACP]. It participates in lipid metabolism; fatty acid biosynthesis. Necessary for the introduction of cis unsaturation into fatty acids. Catalyzes the dehydration of (3R)-3-hydroxydecanoyl-ACP to E-(2)-decenoyl-ACP and then its isomerization to Z-(3)-decenoyl-ACP. Can catalyze the dehydratase reaction for beta-hydroxyacyl-ACPs with saturated chain lengths up to 16:0, being most active on intermediate chain length. The protein is 3-hydroxydecanoyl-[acyl-carrier-protein] dehydratase of Xanthomonas campestris pv. campestris (strain 8004).